The sequence spans 218 residues: MKKFVYKYSFGALLLLSGLSSCCPSSYGSTPAKNTAEIKEESVILREEPESGCKKKSSCCLRKFFSRKKPKEKPEPVLPNFKSYADPMTDAERKDLSFVVSAAAEKSSIALAMAQGEIKGALSRIREIHPLVLLQALAEDPALIAGMKKMQGRDWVWNIFMTELSKAFSQAASLGAFSVADVAAFASTLGLDSGTVTSIVDGERWAELIDVVIQSPTI.

Positions 1–21 are cleaved as a signal peptide; it reads MKKFVYKYSFGALLLLSGLSS. Cysteine 22 carries the N-palmitoyl cysteine lipid modification. Cysteine 22 is lipidated: S-diacylglycerol cysteine.

This sequence belongs to the chlamydial CPn_0875/CT_734/TC_0107 family.

The protein resides in the cell membrane. This is an uncharacterized protein from Chlamydia muridarum (strain MoPn / Nigg).